The chain runs to 155 residues: Ciliary microtubule inner protein 2C (155 aa).

Belongs to the CIMIP2 family.

The protein resides in the cytoplasm. The protein localises to the cytoskeleton. It localises to the cilium axoneme. Functionally, microtubule inner protein (MIP) part of the dynein-decorated doublet microtubules (DMTs) in cilia axoneme, which is required for motile cilia beating. This is Ciliary microtubule inner protein 2C (cimip2ca) from Xenopus laevis (African clawed frog).